The primary structure comprises 325 residues: ATP synthase subunit gamma, mitochondrial (325 aa).

The transit peptide at 1-42 directs the protein to the mitochondrion; that stretch reads MAMAVFRREGRRLLPSIAARPIAAIRSPLSSDQEEGLLGVRS.

This sequence belongs to the ATPase gamma chain family. In terms of assembly, F-type ATPases have 2 components, CF(1) - the catalytic core - and CF(0) - the membrane proton channel. CF(1) has five subunits: alpha(3), beta(3), gamma(1), delta(1), epsilon(1). CF(0) has three main subunits: a, b and c.

It localises to the mitochondrion. The protein resides in the mitochondrion inner membrane. In terms of biological role, mitochondrial membrane ATP synthase (F(1)F(0) ATP synthase or Complex V) produces ATP from ADP in the presence of a proton gradient across the membrane which is generated by electron transport complexes of the respiratory chain. F-type ATPases consist of two structural domains, F(1) - containing the extramembraneous catalytic core, and F(0) - containing the membrane proton channel, linked together by a central stalk and a peripheral stalk. During catalysis, ATP synthesis in the catalytic domain of F(1) is coupled via a rotary mechanism of the central stalk subunits to proton translocation. Part of the complex F(1) domain and the central stalk which is part of the complex rotary element. The gamma subunit protrudes into the catalytic domain formed of alpha(3)beta(3). Rotation of the central stalk against the surrounding alpha(3)beta(3) subunits leads to hydrolysis of ATP in three separate catalytic sites on the beta subunits. This Arabidopsis thaliana (Mouse-ear cress) protein is ATP synthase subunit gamma, mitochondrial (ATPC).